Consider the following 270-residue polypeptide: Formamidopyrimidine-DNA glycosylase (270 aa).

Pro-2 functions as the Schiff-base intermediate with DNA in the catalytic mechanism. The Proton donor role is filled by Glu-3. Catalysis depends on Lys-58, which acts as the Proton donor; for beta-elimination activity. DNA contacts are provided by His-91, Arg-110, and Arg-151. The FPG-type zinc-finger motif lies at 236 to 270; sequence FVYGRGGQPCKVCGTELREVKLGQRASVFCPKCQR. The active-site Proton donor; for delta-elimination activity is the Arg-260.

This sequence belongs to the FPG family. Monomer. The cofactor is Zn(2+).

It catalyses the reaction Hydrolysis of DNA containing ring-opened 7-methylguanine residues, releasing 2,6-diamino-4-hydroxy-5-(N-methyl)formamidopyrimidine.. The enzyme catalyses 2'-deoxyribonucleotide-(2'-deoxyribose 5'-phosphate)-2'-deoxyribonucleotide-DNA = a 3'-end 2'-deoxyribonucleotide-(2,3-dehydro-2,3-deoxyribose 5'-phosphate)-DNA + a 5'-end 5'-phospho-2'-deoxyribonucleoside-DNA + H(+). Its function is as follows. Involved in base excision repair of DNA damaged by oxidation or by mutagenic agents. Acts as a DNA glycosylase that recognizes and removes damaged bases. Has a preference for oxidized purines, such as 7,8-dihydro-8-oxoguanine (8-oxoG). Has AP (apurinic/apyrimidinic) lyase activity and introduces nicks in the DNA strand. Cleaves the DNA backbone by beta-delta elimination to generate a single-strand break at the site of the removed base with both 3'- and 5'-phosphates. The sequence is that of Formamidopyrimidine-DNA glycosylase from Pseudomonas entomophila (strain L48).